A 245-amino-acid chain; its full sequence is MKFLHIGLMTLMAGVSNVLAQEEANAEDVMVNIEGQDMTMEEAEAYMAAKEKMGGAQQQREMINLQVNYDLLEEPFADLQDFIVFEVGETATLNYTIHNLDQEETYSIVGVSGAVLSEVDQRNVANLTETNITEIVLAPNATGTLRHKIDMNLTEGRYYILPLLHVKDKNEVKRVMSNTFKLDLINQSISIFDPSFLSIIAVLIALVGGTVYLYSNVVAPPKKIKKKEAIPAKIDESWLPDVHKK.

A signal peptide spans 1-20 (MKFLHIGLMTLMAGVSNVLA). The Lumenal portion of the chain corresponds to 21 to 188 (QEEANAEDVM…TFKLDLINQS (168 aa)). A helical transmembrane segment spans residues 189-209 (ISIFDPSFLSIIAVLIALVGG). Residues 210–245 (TVYLYSNVVAPPKKIKKKEAIPAKIDESWLPDVHKK) lie on the Cytoplasmic side of the membrane.

The protein belongs to the IRC22 family.

The protein resides in the endoplasmic reticulum membrane. In terms of biological role, is probably involved in a pathway contributing to genomic integrity. The chain is Increased recombination centers protein 22 (IRC22) from Candida glabrata (strain ATCC 2001 / BCRC 20586 / JCM 3761 / NBRC 0622 / NRRL Y-65 / CBS 138) (Yeast).